The sequence spans 67 residues: DNA-directed RNA polymerase subunit omega (67 aa).

The protein belongs to the RNA polymerase subunit omega family. As to quaternary structure, the RNAP catalytic core consists of 2 alpha, 1 beta, 1 beta' and 1 omega subunit. When a sigma factor is associated with the core the holoenzyme is formed, which can initiate transcription.

It carries out the reaction RNA(n) + a ribonucleoside 5'-triphosphate = RNA(n+1) + diphosphate. Its function is as follows. Promotes RNA polymerase assembly. Latches the N- and C-terminal regions of the beta' subunit thereby facilitating its interaction with the beta and alpha subunits. The protein is DNA-directed RNA polymerase subunit omega of Ralstonia nicotianae (strain ATCC BAA-1114 / GMI1000) (Ralstonia solanacearum).